A 159-amino-acid chain; its full sequence is Sumo-conjugating enzyme ubc9 (159 aa).

Positions 4–157 constitute a UBC core domain; that stretch reads ISSARLSEER…VKAQSKVYPP (154 aa). Residue Cys93 is the Glycyl thioester intermediate of the active site.

It belongs to the ubiquitin-conjugating enzyme family.

The protein localises to the nucleus. The protein operates within protein modification; protein sumoylation. Accepts the ubiquitin-like protein sumo from the E1 complex and catalyzes its covalent attachment to other proteins with the help of an E3 ligase. This is Sumo-conjugating enzyme ubc9 (ubc9) from Dictyostelium discoideum (Social amoeba).